The primary structure comprises 642 residues: Serotransferrin (642 aa).

Transferrin-like domains follow at residues 1–280 and 290–621; these read GIKE…SLKK and IKWC…SLRQ. Fe(3+)-binding residues include aspartate 25 and tyrosine 54. Cystine bridges form between cysteine 77-cysteine 158, cysteine 121-cysteine 137, and cysteine 186-cysteine 200. Residues threonine 79, lysine 83, alanine 85, and glycine 86 each contribute to the hydrogencarbonate site. Tyrosine 152 lines the Fe(3+) pocket. Histidine 208 serves as a coordination point for Fe(3+). Disulfide bonds link cysteine 293/cysteine 329 and cysteine 303/cysteine 320. Residue aspartate 344 coordinates Fe(3+). Disulfide bonds link cysteine 354/cysteine 633, cysteine 369/cysteine 594, cysteine 402/cysteine 480, cysteine 426/cysteine 622, cysteine 436/cysteine 450, cysteine 447/cysteine 463, and cysteine 520/cysteine 535. N-linked (GlcNAc...) asparagine glycosylation occurs at asparagine 365. Residue tyrosine 379 participates in Fe(3+) binding. Hydrogencarbonate-binding residues include threonine 404, arginine 408, alanine 410, and glycine 411. Tyrosine 474 lines the Fe(3+) pocket. Histidine 543 contributes to the Fe(3+) binding site.

It belongs to the transferrin family. In terms of assembly, monomer. As to expression, brain and liver; to a lesser extent in kidney and heart.

The protein resides in the secreted. Functionally, transferrins are iron binding transport proteins which can bind two Fe(3+) ions in association with the binding of an anion, usually bicarbonate. The sequence is that of Serotransferrin (tf) from Gadus morhua (Atlantic cod).